The sequence spans 238 residues: Pyridoxine 5'-phosphate synthase (238 aa).

Asn7 is a 3-amino-2-oxopropyl phosphate binding site. 9-10 (DH) provides a ligand contact to 1-deoxy-D-xylulose 5-phosphate. Arg18 contacts 3-amino-2-oxopropyl phosphate. His43 serves as the catalytic Proton acceptor. 1-deoxy-D-xylulose 5-phosphate contacts are provided by Arg45 and His50. The Proton acceptor role is filled by Glu70. Position 100 (Thr100) interacts with 1-deoxy-D-xylulose 5-phosphate. The active-site Proton donor is the His190. 3-amino-2-oxopropyl phosphate contacts are provided by residues Gly191 and 212 to 213 (GH).

The protein belongs to the PNP synthase family. In terms of assembly, homooctamer; tetramer of dimers.

The protein resides in the cytoplasm. It carries out the reaction 3-amino-2-oxopropyl phosphate + 1-deoxy-D-xylulose 5-phosphate = pyridoxine 5'-phosphate + phosphate + 2 H2O + H(+). The protein operates within cofactor biosynthesis; pyridoxine 5'-phosphate biosynthesis; pyridoxine 5'-phosphate from D-erythrose 4-phosphate: step 5/5. Its function is as follows. Catalyzes the complicated ring closure reaction between the two acyclic compounds 1-deoxy-D-xylulose-5-phosphate (DXP) and 3-amino-2-oxopropyl phosphate (1-amino-acetone-3-phosphate or AAP) to form pyridoxine 5'-phosphate (PNP) and inorganic phosphate. In Prochlorococcus marinus (strain MIT 9312), this protein is Pyridoxine 5'-phosphate synthase.